The following is a 259-amino-acid chain: Ribosomal RNA small subunit methyltransferase A (259 aa).

Positions 13, 15, 39, 60, 84, and 101 each coordinate S-adenosyl-L-methionine.

It belongs to the class I-like SAM-binding methyltransferase superfamily. rRNA adenine N(6)-methyltransferase family. RsmA subfamily.

It is found in the cytoplasm. The enzyme catalyses adenosine(1518)/adenosine(1519) in 16S rRNA + 4 S-adenosyl-L-methionine = N(6)-dimethyladenosine(1518)/N(6)-dimethyladenosine(1519) in 16S rRNA + 4 S-adenosyl-L-homocysteine + 4 H(+). Its function is as follows. Specifically dimethylates two adjacent adenosines (A1518 and A1519) in the loop of a conserved hairpin near the 3'-end of 16S rRNA in the 30S particle. May play a critical role in biogenesis of 30S subunits. The protein is Ribosomal RNA small subunit methyltransferase A of Mesomycoplasma hyopneumoniae (strain 232) (Mycoplasma hyopneumoniae).